Here is a 559-residue protein sequence, read N- to C-terminus: Potassium-transporting ATPase potassium-binding subunit (559 aa).

A run of 12 helical transmembrane segments spans residues 5-25, 63-83, 131-151, 173-193, 254-274, 282-302, 327-347, 356-376, 379-399, 416-436, 483-503, and 525-545; these read GFLLLASYLLVLLVLARPLGT, LLAILLFNALGGLALFALLML, VGLTVQNFLSAATGIAVVFAL, ITLWLLLPLSLLVALFFIQQG, VQMLAIFLIPAALCFAFGEVV, AILWAMTLIFILCVAVVMWAE, FGILASSLFAVITTAASCGAV, ALGGMVPMWLMQIGEVVFGGV, GLYGMLLFVMLAVFIAGLMVG, MIALAILVTPTLVLLGTALAM, LLLAFCMLVGRFAVIIPVMAI, and ALFIGLLIGTVLLVGALTFIP.

The protein belongs to the KdpA family. The system is composed of three essential subunits: KdpA, KdpB and KdpC.

It localises to the cell inner membrane. Its function is as follows. Part of the high-affinity ATP-driven potassium transport (or Kdp) system, which catalyzes the hydrolysis of ATP coupled with the electrogenic transport of potassium into the cytoplasm. This subunit binds the periplasmic potassium ions and delivers the ions to the membrane domain of KdpB through an intramembrane tunnel. The sequence is that of Potassium-transporting ATPase potassium-binding subunit from Klebsiella pneumoniae (strain 342).